A 791-amino-acid chain; its full sequence is MRRSLAPSQRIGQSTASRNAFTPPLLQKKNKRACQKDLRLDTDADEDKERKRFGLRDATNSEIPLPIRFTANSAYELAIAQVLARKFKVPIDNYVPDYGGNRCLGVRRVVVRRPLHDPQACNALVLFQPPNYTEHERMSMDPSKVLVHVVVDPLLSNILRPHQREGVRFMYECVEGKKGDFNGCIMADEMGLGKTLQCVTLVWTLLRQGPESKPTINKAIVVSPSSLVKNWEKEFTKWLQGRLLCLAMEGGTKENTIRVLEQFSMTSSKLGTPVLLISYETFRIYAEILCKYEVGMVICDEGHRLKNSDNLTYQALMGLKTKRRVLLSGTPIQNDLTEYFSLVNFVNPEMLGTAADFKRNFENSILRGQNADSTEGERKKAIEKTQELIGLVDQCIIRRTNQILTKYLPIKFEMVICVKLTAIQLQLYTNFLNSDQVRRSLADCNEKASLTALADITTLKKICSHPDLIHQKIEAKEKGFENSQNVLPSNYKPKEICPEWSGKFMLLDFMLAAIRAAGNDKVVLISNYTQTLDLFEQLARKRKYGFVRLDGTMSIKKRSKVVDKFNDPDSECFLFMLSSKAGGCGLNLIGANRLFMFDPDWNPANDEQAMARVWRDGQKKPCYIYRLVASGTIEEKILQRQTHKKSLSSTIIDNNESSEKHFTRDDLKDLFSFDQKILSDTHEKLKCKRCVQNIQTKPPSESTDCTSHLSQWYHCSNNRGLPDSILAQAWTDSKCVSFVFHHRSQAKEVVESPESAAAEAESVEEESQPTQRKRPSPPLSDDSADEDFIGF.

The segment covering 1 to 20 (MRRSLAPSQRIGQSTASRNA) has biased composition (polar residues). A disordered region spans residues 1 to 53 (MRRSLAPSQRIGQSTASRNAFTPPLLQKKNKRACQKDLRLDTDADEDKERKRF). Residues 2 to 9 (RRSLAPSQ) form a required for chromatin remodeling, strand pairing activities and coupling of ATPase activity region. Phosphothreonine is present on T22. Residues 34-53 (CQKDLRLDTDADEDKERKRF) are compositionally biased toward basic and acidic residues. Residues 175-349 (EGKKGDFNGC…FSLVNFVNPE (175 aa)) enclose the Helicase ATP-binding domain. 188-195 (DEMGLGKT) provides a ligand contact to ATP. Positions 300-303 (DEGH) match the DEGH box motif. The Helicase C-terminal domain occupies 506–663 (LLDFMLAAIR…NNESSEKHFT (158 aa)). Residues 747–791 (KEVVESPESAAAEAESVEEESQPTQRKRPSPPLSDDSADEDFIGF) form a disordered region. Positions 782–791 (DSADEDFIGF) are enriched in acidic residues.

This sequence belongs to the SNF2/RAD54 helicase family. In terms of assembly, interacts (via N-terminus) with spn-A/Rad51.

It is found in the nucleus. In terms of biological role, involved in mitotic DNA repair and meiotic recombination. Functions in the recombinational DNA repair pathway. Essential for interhomolog gene conversion (GC), but may have a less important role in intersister GC than spn-A/Rad51. In the presence of DNA, spn-A/Rad51 enhances the ATPase activity of okr/Rad54. This chain is DNA repair and recombination protein RAD54-like, found in Drosophila ananassae (Fruit fly).